We begin with the raw amino-acid sequence, 25 residues long: C-type natriuretic peptide (25 aa).

An intrachain disulfide couples cysteine 9 to cysteine 25.

Venom gland.

Its subcellular location is the secreted. Snake venom natriuretic peptide that has a vasorelaxant activity in rat aortic strips and a diuretic potency in anesthetized rats. May act by activating natriuretic receptors (NPR1 and/or NPR2). This chain is C-type natriuretic peptide, found in Crotalus atrox (Western diamondback rattlesnake).